A 731-amino-acid chain; its full sequence is MSHADQLARTHLAPDPADLSRLVAGTHHDPHGILGAHEYGDHTVIRAFRPHATEVAALVGGDRFAMQHIESGLFAVALPFTNLIDYRLQITYPDSEPYVVADAYRFLPTLGEVDLHLFGEGRHERLWEVLGAHPRSFTTADGVVTGVSFAVWAPNAKGISLIGEFNGWTGTEAPMRVLGSSGVWELFWPDFPIGGLYKFKVHGADGVVTERADPMAFATEVPPHTASRVTLSSYTWGDADWMTQRAARNPVFEPMSTYEVHLGSWRPGLSYRQLARELTDYVVEHGFTHVELLPVAEHPFAGSWGYQVTSYYAPTSRFGTPDEFRALVDALHQAGIGVIVDWVPAHFPKDAWALGRFDGTPLYEHSDPKRGEQLDWGTYVFDFGRREVRNFLVANALYWLQEFHIDGLRVDAVASMLYLDYSRPEGGWTPNIYGGRENLEAVQFLQEMNATAHKSAPGIVTIAEESTSWPGVTRPTNLGGLGFSMKWNMGWMHDTLDYISRDPIYRSYHHHEMTFSMLYAFSENYVLPLSHDEVVHGKGTLWGRMPGNNHVKAAGLRSLLAYQWAHPGKQLLFMGQEFGQRAEWSEERGLDWWQLDEQGFSNGILRLVRDINDIYRSHPALWSQDTVPDGYSWIDANDSANNVLSFLRYGKDGSVMACVFNFAGAEHSGYRLGLPSAGRWREVLNTDATVYNGSGIGNMGGVDATEDPWHGRPASAVLVLPPTSALWLEPK.

Catalysis depends on aspartate 411, which acts as the Nucleophile. The Proton donor role is filled by glutamate 464.

The protein belongs to the glycosyl hydrolase 13 family. GlgB subfamily. As to quaternary structure, monomer.

The enzyme catalyses Transfers a segment of a (1-&gt;4)-alpha-D-glucan chain to a primary hydroxy group in a similar glucan chain.. It participates in glycan biosynthesis; glycogen biosynthesis. Catalyzes the formation of the alpha-1,6-glucosidic linkages in glycogen by scission of a 1,4-alpha-linked oligosaccharide from growing alpha-1,4-glucan chains and the subsequent attachment of the oligosaccharide to the alpha-1,6 position. The polypeptide is 1,4-alpha-glucan branching enzyme GlgB (Mycolicibacterium paratuberculosis (strain ATCC BAA-968 / K-10) (Mycobacterium paratuberculosis)).